The following is a 230-amino-acid chain: Cytochrome c oxidase subunit 2 (230 aa).

Residues 1–14 (MAHPAQLGFQDAAS) are Mitochondrial intermembrane-facing. The chain crosses the membrane as a helical span at residues 15 to 45 (PVMEELLCFHDHALMIVFLISTLVLYIIIAM). Residues 46–59 (VSTKLTNKFILDSQ) lie on the Mitochondrial matrix side of the membrane. The helical transmembrane segment at 60-87 (EIEIVWTVLPAIILILIALPSLRILYLM) threads the bilayer. Residues 88 to 230 (DEINDPHVTI…NWSSAMLEDA (143 aa)) lie on the Mitochondrial intermembrane side of the membrane. Residues His161, Cys196, Glu198, Cys200, His204, and Met207 each coordinate Cu cation. Glu198 is a Mg(2+) binding site.

The protein belongs to the cytochrome c oxidase subunit 2 family. In terms of assembly, component of the cytochrome c oxidase (complex IV, CIV), a multisubunit enzyme composed of 14 subunits. The complex is composed of a catalytic core of 3 subunits MT-CO1, MT-CO2 and MT-CO3, encoded in the mitochondrial DNA, and 11 supernumerary subunits COX4I, COX5A, COX5B, COX6A, COX6B, COX6C, COX7A, COX7B, COX7C, COX8 and NDUFA4, which are encoded in the nuclear genome. The complex exists as a monomer or a dimer and forms supercomplexes (SCs) in the inner mitochondrial membrane with NADH-ubiquinone oxidoreductase (complex I, CI) and ubiquinol-cytochrome c oxidoreductase (cytochrome b-c1 complex, complex III, CIII), resulting in different assemblies (supercomplex SCI(1)III(2)IV(1) and megacomplex MCI(2)III(2)IV(2)). Found in a complex with TMEM177, COA6, COX18, COX20, SCO1 and SCO2. Interacts with TMEM177 in a COX20-dependent manner. Interacts with COX20. Interacts with COX16. The cofactor is Cu cation.

Its subcellular location is the mitochondrion inner membrane. It catalyses the reaction 4 Fe(II)-[cytochrome c] + O2 + 8 H(+)(in) = 4 Fe(III)-[cytochrome c] + 2 H2O + 4 H(+)(out). Component of the cytochrome c oxidase, the last enzyme in the mitochondrial electron transport chain which drives oxidative phosphorylation. The respiratory chain contains 3 multisubunit complexes succinate dehydrogenase (complex II, CII), ubiquinol-cytochrome c oxidoreductase (cytochrome b-c1 complex, complex III, CIII) and cytochrome c oxidase (complex IV, CIV), that cooperate to transfer electrons derived from NADH and succinate to molecular oxygen, creating an electrochemical gradient over the inner membrane that drives transmembrane transport and the ATP synthase. Cytochrome c oxidase is the component of the respiratory chain that catalyzes the reduction of oxygen to water. Electrons originating from reduced cytochrome c in the intermembrane space (IMS) are transferred via the dinuclear copper A center (CU(A)) of subunit 2 and heme A of subunit 1 to the active site in subunit 1, a binuclear center (BNC) formed by heme A3 and copper B (CU(B)). The BNC reduces molecular oxygen to 2 water molecules using 4 electrons from cytochrome c in the IMS and 4 protons from the mitochondrial matrix. In Danio rerio (Zebrafish), this protein is Cytochrome c oxidase subunit 2 (mt-co2).